A 143-amino-acid chain; its full sequence is Nucleoside diphosphate kinase (143 aa).

Residues lysine 11, phenylalanine 59, arginine 87, threonine 93, arginine 104, and asparagine 114 each coordinate ATP. Catalysis depends on histidine 117, which acts as the Pros-phosphohistidine intermediate.

This sequence belongs to the NDK family. As to quaternary structure, homotetramer. Requires Mg(2+) as cofactor.

It is found in the cytoplasm. The catalysed reaction is a 2'-deoxyribonucleoside 5'-diphosphate + ATP = a 2'-deoxyribonucleoside 5'-triphosphate + ADP. The enzyme catalyses a ribonucleoside 5'-diphosphate + ATP = a ribonucleoside 5'-triphosphate + ADP. Functionally, major role in the synthesis of nucleoside triphosphates other than ATP. The ATP gamma phosphate is transferred to the NDP beta phosphate via a ping-pong mechanism, using a phosphorylated active-site intermediate. The sequence is that of Nucleoside diphosphate kinase from Shewanella piezotolerans (strain WP3 / JCM 13877).